We begin with the raw amino-acid sequence, 268 residues long: Tetraspanin-33 (268 aa).

At 1–23 (MVRKSPGSGKEEDFTFISPVVKY) the chain is on the cytoplasmic side. Residues 24–44 (LLIFFNMLFWVISMVMVGIGV) traverse the membrane as a helical segment. Topologically, residues 45 to 63 (YARLLKHAEAAMACLAVDP) are extracellular. Residues 64-84 (ALLLIGVGILMFLITFCGCIG) form a helical membrane-spanning segment. The Cytoplasmic segment spans residues 85–95 (SLRENICLLQT). The helical transmembrane segment at 96 to 116 (FSICLTLVFLLQLAVGIVGFI) threads the bilayer. Residues 117 to 226 (FSDKARGKVS…FIHTNGCIDR (110 aa)) are Extracellular-facing. 4 disulfides stabilise this stretch: Cys155–Cys223, Cys156–Cys188, Cys172–Cys182, and Cys189–Cys202. Asn171 and Asn176 each carry an N-linked (GlcNAc...) asparagine glycan. A helical membrane pass occupies residues 227 to 247 (LVNWIHSNLFLLGGVALGLAI). Residues 248–268 (PQVTKHLRAKLIYTWRIGIQV) lie on the Cytoplasmic side of the membrane.

The protein belongs to the tetraspanin (TM4SF) family. In terms of assembly, homodimer; disulfide-linked.

It localises to the cell membrane. The protein resides in the cell junction. The protein localises to the adherens junction. It is found in the cytoplasm. Functionally, part of TspanC8 subgroup, composed of 6 members that interact with the transmembrane metalloprotease ADAM10. This interaction is required for ADAM10 exit from the endoplasmic reticulum and for enzymatic maturation and trafficking to the cell surface as well as substrate specificity. Different TspanC8/ADAM10 complexes have distinct substrates. The polypeptide is Tetraspanin-33 (tspan33) (Xenopus laevis (African clawed frog)).